We begin with the raw amino-acid sequence, 367 residues long: Peptide chain release factor 1 (367 aa).

Residue glutamine 243 is modified to N5-methylglutamine.

This sequence belongs to the prokaryotic/mitochondrial release factor family. In terms of processing, methylated by PrmC. Methylation increases the termination efficiency of RF1.

It localises to the cytoplasm. Its function is as follows. Peptide chain release factor 1 directs the termination of translation in response to the peptide chain termination codons UAG and UAA. The polypeptide is Peptide chain release factor 1 (Acidovorax ebreus (strain TPSY) (Diaphorobacter sp. (strain TPSY))).